The following is a 221-amino-acid chain: Transcription antitermination protein NusB (221 aa).

Belongs to the NusB family.

Its function is as follows. Involved in transcription antitermination. Required for transcription of ribosomal RNA (rRNA) genes. Binds specifically to the boxA antiterminator sequence of the ribosomal RNA (rrn) operons. The sequence is that of Transcription antitermination protein NusB from Synechocystis sp. (strain ATCC 27184 / PCC 6803 / Kazusa).